The primary structure comprises 190 residues: Large ribosomal subunit protein bL25 (190 aa).

The protein belongs to the bacterial ribosomal protein bL25 family. CTC subfamily. Part of the 50S ribosomal subunit; part of the 5S rRNA/L5/L18/L25 subcomplex. Contacts the 5S rRNA. Binds to the 5S rRNA independently of L5 and L18.

Its function is as follows. This is one of the proteins that binds to the 5S RNA in the ribosome where it forms part of the central protuberance. The polypeptide is Large ribosomal subunit protein bL25 (Neisseria meningitidis serogroup C (strain 053442)).